We begin with the raw amino-acid sequence, 309 residues long: Type II methyltransferase M.HindIII (309 aa).

It belongs to the N(4)/N(6)-methyltransferase family.

The catalysed reaction is a 2'-deoxyadenosine in DNA + S-adenosyl-L-methionine = an N(6)-methyl-2'-deoxyadenosine in DNA + S-adenosyl-L-homocysteine + H(+). Its function is as follows. A beta subtype methylase that recognizes the double-stranded sequence 5'-AAGCTT-3', methylates A-1 on both strands, and protects the DNA from cleavage by the HindIII endonuclease. The sequence is that of Type II methyltransferase M.HindIII from Haemophilus influenzae (strain ATCC 51907 / DSM 11121 / KW20 / Rd).